The sequence spans 194 residues: Holliday junction branch migration complex subunit RuvA (194 aa).

The segment at 1-61 is domain I; sequence MYDFLTGIIK…DNQISLYGFK (61 aa). The tract at residues 62-139 is domain II; that stretch reads TVKERNLFQK…GDFSKNIAPM (78 aa). The tract at residues 139–143 is flexible linker; sequence MKNLL. The interval 144–194 is domain III; it reads ENSAELDDALAALVALGFSSKEVNKINPKLASLGELTTDAYIQKGLKLLTK.

Belongs to the RuvA family. Homotetramer. Forms an RuvA(8)-RuvB(12)-Holliday junction (HJ) complex. HJ DNA is sandwiched between 2 RuvA tetramers; dsDNA enters through RuvA and exits via RuvB. An RuvB hexamer assembles on each DNA strand where it exits the tetramer. Each RuvB hexamer is contacted by two RuvA subunits (via domain III) on 2 adjacent RuvB subunits; this complex drives branch migration. In the full resolvosome a probable DNA-RuvA(4)-RuvB(12)-RuvC(2) complex forms which resolves the HJ.

It is found in the cytoplasm. The RuvA-RuvB-RuvC complex processes Holliday junction (HJ) DNA during genetic recombination and DNA repair, while the RuvA-RuvB complex plays an important role in the rescue of blocked DNA replication forks via replication fork reversal (RFR). RuvA specifically binds to HJ cruciform DNA, conferring on it an open structure. The RuvB hexamer acts as an ATP-dependent pump, pulling dsDNA into and through the RuvAB complex. HJ branch migration allows RuvC to scan DNA until it finds its consensus sequence, where it cleaves and resolves the cruciform DNA. This Oenococcus oeni (strain ATCC BAA-331 / PSU-1) protein is Holliday junction branch migration complex subunit RuvA.